Reading from the N-terminus, the 249-residue chain is 5'-nucleotidase SurE (249 aa).

A divalent metal cation-binding residues include Asp-8, Asp-9, Ser-39, and Asn-91.

It belongs to the SurE nucleotidase family. A divalent metal cation is required as a cofactor.

It is found in the cytoplasm. The enzyme catalyses a ribonucleoside 5'-phosphate + H2O = a ribonucleoside + phosphate. In terms of biological role, nucleotidase that shows phosphatase activity on nucleoside 5'-monophosphates. The protein is 5'-nucleotidase SurE of Pseudomonas putida (strain ATCC 47054 / DSM 6125 / CFBP 8728 / NCIMB 11950 / KT2440).